We begin with the raw amino-acid sequence, 161 residues long: Protein-export protein SecB (161 aa).

This sequence belongs to the SecB family. In terms of assembly, homotetramer, a dimer of dimers. One homotetramer interacts with 1 SecA dimer.

The protein localises to the cytoplasm. Its function is as follows. One of the proteins required for the normal export of preproteins out of the cell cytoplasm. It is a molecular chaperone that binds to a subset of precursor proteins, maintaining them in a translocation-competent state. It also specifically binds to its receptor SecA. The polypeptide is Protein-export protein SecB (Rhodopseudomonas palustris (strain BisA53)).